A 333-amino-acid chain; its full sequence is tRNA-modifying protein YgfZ (333 aa).

Positions 33 and 195 each coordinate folate.

Belongs to the tRNA-modifying YgfZ family.

The protein localises to the cytoplasm. Folate-binding protein involved in regulating the level of ATP-DnaA and in the modification of some tRNAs. It is probably a key factor in regulatory networks that act via tRNA modification, such as initiation of chromosomal replication. The chain is tRNA-modifying protein YgfZ from Pectobacterium carotovorum subsp. carotovorum (strain PC1).